The primary structure comprises 590 residues: Muscarinic acetylcholine receptor M3 (590 aa).

At 1–67 (MTLHNNNTTS…DPLGGHTIWQ (67 aa)) the chain is on the extracellular side. N-linked (GlcNAc...) asparagine glycans are attached at residues Asn6, Asn7, Asn15, Asn41, Asn48, and Asn53. Residues 68-91 (VVFIAFLTGILALVTIIGNILVIV) form a helical membrane-spanning segment. The Cytoplasmic portion of the chain corresponds to 92 to 104 (AFKVNKQLKTVNN). Residues 105 to 130 (YFLLSLACADLIIGVISMNLFTTYII) traverse the membrane as a helical segment. At 131–142 (MNRWALGNLACD) the chain is on the extracellular side. An intrachain disulfide couples Cys141 to Cys221. The helical transmembrane segment at 143-164 (LWLSIDYVASNASVMNLLVISF) threads the bilayer. The Cytoplasmic portion of the chain corresponds to 165–184 (DRYFSITRPLTYRAKRTTKR). A helical membrane pass occupies residues 185–206 (AGVMIGLAWVISFILWAPAILF). Residues 207–229 (WQYFVGKRTVPPGECFIQFLSEP) lie on the Extracellular side of the membrane. Residues 230-252 (TITFGTAIAAFYMPVTIMTILYW) traverse the membrane as a helical segment. The Cytoplasmic segment spans residues 253-491 (RIYKETEKRT…SLIKEKKAAQ (239 aa)). The Basolateral sorting signal motif lies at 275–281 (AEAENFV). The disordered stretch occupies residues 324–357 (AEQMDQDHSSSDSWNNNDAAASLENSASSDEEDI). Residues 334-345 (SDSWNNNDAAAS) show a composition bias toward low complexity. Ser385 bears the Phosphoserine mark. The chain crosses the membrane as a helical span at residues 492 to 514 (TLSAILLAFIITWTPYNIMVLVN). Topologically, residues 515 to 526 (TFCDSCIPKTYW) are extracellular. Residues Cys517 and Cys520 are joined by a disulfide bond. Residues 527–546 (NLGYWLCYINSTVNPVCYAL) traverse the membrane as a helical segment. The Cytoplasmic portion of the chain corresponds to 547-590 (CNKTFRTTFKMLLLCQCDKRKRRKQQYQQRQSVIFHKRVPEQAL).

This sequence belongs to the G-protein coupled receptor 1 family. Muscarinic acetylcholine receptor subfamily. CHRM3 sub-subfamily. Homodimer; the dimers can form tetramers. Interacts with NALCN. Interacts with TMEM147.

The protein localises to the cell membrane. Its subcellular location is the postsynaptic cell membrane. The protein resides in the basolateral cell membrane. It is found in the endoplasmic reticulum membrane. Functionally, the muscarinic acetylcholine receptor mediates various cellular responses, including inhibition of adenylate cyclase, breakdown of phosphoinositides and modulation of potassium channels through the action of G proteins. Primary transducing effect is Pi turnover. The protein is Muscarinic acetylcholine receptor M3 (CHRM3) of Sus scrofa (Pig).